The chain runs to 252 residues: Membrane protein insertase YidC (252 aa).

The N-terminal stretch at 1-19 is a signal peptide; the sequence is MKKVLWIIIIILMVGALAG. The N-palmitoyl cysteine moiety is linked to residue cysteine 20. Cysteine 20 carries S-diacylglycerol cysteine lipidation. 6 helical membrane passes run 34-54, 58-78, 131-151, 162-182, 201-221, and 223-243; these read IWNH…ADLL, FGLS…PLMI, MAGC…YFAI, FLWF…VAGI, VIIY…PSAL, and LYWV…VVRF.

This sequence belongs to the OXA1/ALB3/YidC family. Type 2 subfamily.

It is found in the cell membrane. Its function is as follows. Required for the insertion and/or proper folding and/or complex formation of integral membrane proteins into the membrane. Involved in integration of membrane proteins that insert both dependently and independently of the Sec translocase complex, as well as at least some lipoproteins. The sequence is that of Membrane protein insertase YidC from Alkalihalophilus pseudofirmus (strain ATCC BAA-2126 / JCM 17055 / OF4) (Bacillus pseudofirmus).